The sequence spans 195 residues: Apoptosis-associated speck-like protein containing a CARD (195 aa).

Positions 1 to 91 (MGCTRDAILD…AEQLQETMSK (91 aa)) constitute a Pyrin domain. Residues Lys-55 and Lys-174 each participate in a glycyl lysine isopeptide (Lys-Gly) (interchain with G-Cter in ubiquitin) cross-link. Positions 107-195 (TAKPGLHFVD…PYLVDDLEQS (89 aa)) constitute a CARD domain. Ser-195 is subject to Phosphoserine.

As to quaternary structure, self-associates; enforced oligomerization induces apoptosis, NF-kappa-B regulation and interleukin-1 beta secretion. Homooligomers can form disk-like particles of approximately 12 nm diameter and approximately 1 nm height. Component of several inflammasomes containing one pattern recognition receptor/sensor, such as NLRP1, NLRP2, NLRP3, NLRP6, NLRC4, AIM2, MEFV or NOD2, and probably NLRC4 or NLRP12. Major component of the ASC pyroptosome, a 1-2 um supramolecular assembly (one per macrophage cell) which consists of oligomerized PYCARD dimers and CASP1. Interacts with CASP1 (precursor form); the interaction induces activation of CASP1 leading to the processing of interleukin-1 beta; PYCARD competes with RIPK2 for binding to CASP1. Interacts with NLRP3; the interaction requires the homooligomerization of NLRP3. Interacts with NLRP2, NLRC4, MEFV, CARD16, AIM2, NOD2, RIGI, RIPK2, PYDC1, PYDC2, NLRP10, CASP8, CHUK, IKBKB and BAX. Component of the AIM2 PANoptosome complex, a multiprotein complex that drives inflammatory cell death (PANoptosis). Post-translationally, phosphorylated. In terms of processing, 'Lys-63'-linked polyubiquitination by TRAF3 is critical for speck formation and inflammasome activation. 'Lys-63'-linked deubiquitinated by USP50; a crucial step for NLRP3-mediated inflammasome activation. 'Lys-63'-linked polyubiquitination by PELI1 is also critical for speck formation and inflammasome activation. Deubiquitinated by USP3 that cleaves 'Lys-48'-linked ubiquitin chains and strengthens its stability by blocking proteasomal degradation.

Its subcellular location is the cytoplasm. The protein resides in the inflammasome. It localises to the endoplasmic reticulum. It is found in the mitochondrion. The protein localises to the nucleus. Its function is as follows. Functions as a key mediator in apoptosis and inflammation. Promotes caspase-mediated apoptosis involving predominantly caspase-8 and also caspase-9 in a probable cell type-specific manner. Involved in activation of the mitochondrial apoptotic pathway, promotes caspase-8-dependent proteolytic maturation of BID independently of FADD in certain cell types and also mediates mitochondrial translocation of BAX and activates BAX-dependent apoptosis coupled to activation of caspase-9, -2 and -3. Involved in innate immune response by acting as an integral adapter in the assembly of various inflammasomes (NLRP2, NLRP3, NLRP6 and AIM2) which recruit and activate caspase-1 leading to processing and secretion of pro-inflammatory cytokines. Caspase-1-dependent inflammation leads to macrophage pyroptosis, a form of cell death. The function as activating adapter in different types of inflammasomes is mediated by the pyrin and CARD domains and their homotypic interactions. Clustered PYCARD nucleates the formation of caspase-1 filaments through the interaction of their respective CARD domains, acting as a platform for of caspase-1 polymerization. In the NLRC4 inflammasomes seems not be required but facilitates the processing of procaspase-1. In cooperation with NOD2 involved in an inflammasome activated by bacterial muramyl dipeptide leading to caspase-1 activation. May be involved in RIGI-triggered pro-inflammatory responses and inflammasome activation. In collaboration with AIM2 which detects cytosolic double-stranded DNA may also be involved in a caspase-1-independent cell death that involves caspase-8. In adaptive immunity may be involved in maturation of dendritic cells to stimulate T-cell immunity and in cytoskeletal rearrangements coupled to chemotaxis and antigen uptake may be involved in post-transcriptional regulation of the guanine nucleotide exchange factor DOCK2; the latter function is proposed to involve the nuclear form. Also involved in transcriptional activation of cytokines and chemokines independent of the inflammasome; this function may involve AP-1, NF-kappa-B, MAPK and caspase-8 signaling pathways. For regulation of NF-kappa-B activating and inhibiting functions have been reported. Modulates NF-kappa-B induction at the level of the IKK complex by inhibiting kinase activity of CHUK and IKBK. Proposed to compete with RIPK2 for association with CASP1 thereby down-regulating CASP1-mediated RIPK2-dependent NF-kappa-B activation and activating interleukin-1 beta processing. Modulates host resistance to DNA virus infection, probably by inducing the cleavage of and inactivating CGAS in presence of cytoplasmic double-stranded DNA. The sequence is that of Apoptosis-associated speck-like protein containing a CARD (PYCARD) from Bos taurus (Bovine).